The primary structure comprises 187 residues: MKKDTGFDSKIEKLARTTASKTGRRGFIGRLGGFLVGSALLPLLPVDRRSRLGGEVQAATTGNLTRSGFKPQDKDPKACEYWRHCTIDGNLCDCCGGTLTSCPPGSSLSPSSWVASCYNPGDQQTYLIAYRDCCGKQTCGRCNCVNTQGELPVYRPEFNNDIVWCFGADNDAMTYHCTISPIVGKAS.

The segment at residues 1–57 (MKKDTGFDSKIEKLARTTASKTGRRGFIGRLGGFLVGSALLPLLPVDRRSRLGGEVQ) is a signal peptide (tat-type signal). Disulfide bonds link cysteine 79–cysteine 144, cysteine 85–cysteine 117, cysteine 92–cysteine 177, cysteine 94–cysteine 142, cysteine 102–cysteine 133, and cysteine 134–cysteine 165. Tryptophylquinone is present on tryptophan 113. The tryptophan tryptophylquinone (Trp-Trp) cross-link spans 113-164 (WVASCYNPGDQQTYLIAYRDCCGKQTCGRCNCVNTQGELPVYRPEFNNDIVW).

Belongs to the aromatic amine dehydrogenase light chain family. In terms of assembly, heterotetramer of two light and two heavy chains. It depends on tryptophan tryptophylquinone residue as a cofactor. Post-translationally, predicted to be exported by the Tat system. The position of the signal peptide cleavage has not been experimentally proven. Tryptophan tryptophylquinone (TTQ) is formed by oxidation of the indole ring of a tryptophan to form tryptophylquinone followed by covalent cross-linking with another tryptophan residue.

Its subcellular location is the periplasm. It catalyses the reaction 2 oxidized [amicyanin] + methylamine + H2O = 2 reduced [amicyanin] + formaldehyde + NH4(+) + 2 H(+). The protein operates within one-carbon metabolism; methylamine degradation; formaldehyde from methylamine: step 1/1. In terms of biological role, methylamine dehydrogenase carries out the oxidation of methylamine. Electrons are passed from methylamine dehydrogenase to amicyanin. In Methylophilus methylotrophus (Bacterium W3A1), this protein is Methylamine dehydrogenase light chain (mauA).